The primary structure comprises 209 residues: Thiamine-phosphate synthase (209 aa).

4-amino-2-methyl-5-(diphosphooxymethyl)pyrimidine contacts are provided by residues 35–39 (QYRDK) and Asn67. Mg(2+) is bound by residues Asp68 and Asp86. Position 105 (Thr105) interacts with 4-amino-2-methyl-5-(diphosphooxymethyl)pyrimidine. 132-134 (SNT) serves as a coordination point for 2-[(2R,5Z)-2-carboxy-4-methylthiazol-5(2H)-ylidene]ethyl phosphate. Lys135 contributes to the 4-amino-2-methyl-5-(diphosphooxymethyl)pyrimidine binding site. Gly162 serves as a coordination point for 2-[(2R,5Z)-2-carboxy-4-methylthiazol-5(2H)-ylidene]ethyl phosphate.

It belongs to the thiamine-phosphate synthase family. The cofactor is Mg(2+).

The enzyme catalyses 2-[(2R,5Z)-2-carboxy-4-methylthiazol-5(2H)-ylidene]ethyl phosphate + 4-amino-2-methyl-5-(diphosphooxymethyl)pyrimidine + 2 H(+) = thiamine phosphate + CO2 + diphosphate. The catalysed reaction is 2-(2-carboxy-4-methylthiazol-5-yl)ethyl phosphate + 4-amino-2-methyl-5-(diphosphooxymethyl)pyrimidine + 2 H(+) = thiamine phosphate + CO2 + diphosphate. It catalyses the reaction 4-methyl-5-(2-phosphooxyethyl)-thiazole + 4-amino-2-methyl-5-(diphosphooxymethyl)pyrimidine + H(+) = thiamine phosphate + diphosphate. Its pathway is cofactor biosynthesis; thiamine diphosphate biosynthesis; thiamine phosphate from 4-amino-2-methyl-5-diphosphomethylpyrimidine and 4-methyl-5-(2-phosphoethyl)-thiazole: step 1/1. Condenses 4-methyl-5-(beta-hydroxyethyl)thiazole monophosphate (THZ-P) and 2-methyl-4-amino-5-hydroxymethyl pyrimidine pyrophosphate (HMP-PP) to form thiamine monophosphate (TMP). The sequence is that of Thiamine-phosphate synthase from Pseudomonas fluorescens (strain SBW25).